Here is a 446-residue protein sequence, read N- to C-terminus: Histidine--tRNA ligase (446 aa).

Belongs to the class-II aminoacyl-tRNA synthetase family. Homodimer.

It localises to the cytoplasm. The catalysed reaction is tRNA(His) + L-histidine + ATP = L-histidyl-tRNA(His) + AMP + diphosphate + H(+). The protein is Histidine--tRNA ligase of Burkholderia cenocepacia (strain ATCC BAA-245 / DSM 16553 / LMG 16656 / NCTC 13227 / J2315 / CF5610) (Burkholderia cepacia (strain J2315)).